A 670-amino-acid chain; its full sequence is DNA ligase (670 aa).

Residues 33 to 37 (DAEFD), 82 to 83 (SL), and Glu113 each bind NAD(+). Lys115 (N6-AMP-lysine intermediate) is an active-site residue. NAD(+)-binding residues include Arg136, Glu170, Lys285, and Lys309. Cys403, Cys406, Cys421, and Cys427 together coordinate Zn(2+). The BRCT domain maps to 587 to 670 (EQNLYLSGKT…EVLKAGDNNG (84 aa)).

The protein belongs to the NAD-dependent DNA ligase family. LigA subfamily. The cofactor is Mg(2+). Mn(2+) serves as cofactor.

It catalyses the reaction NAD(+) + (deoxyribonucleotide)n-3'-hydroxyl + 5'-phospho-(deoxyribonucleotide)m = (deoxyribonucleotide)n+m + AMP + beta-nicotinamide D-nucleotide.. In terms of biological role, DNA ligase that catalyzes the formation of phosphodiester linkages between 5'-phosphoryl and 3'-hydroxyl groups in double-stranded DNA using NAD as a coenzyme and as the energy source for the reaction. It is essential for DNA replication and repair of damaged DNA. This chain is DNA ligase, found in Halothermothrix orenii (strain H 168 / OCM 544 / DSM 9562).